Reading from the N-terminus, the 904-residue chain is HTH-type transcriptional regulator MalT (904 aa).

39-46 (CPAGYGKT) contacts ATP. Residues 832-897 (ELIRTSPLTQ…EAVQQAQQLL (66 aa)) form the HTH luxR-type domain. The segment at residues 856–875 (NDQIAGELAVAATTIKTHIR) is a DNA-binding region (H-T-H motif).

The protein belongs to the MalT family. Monomer in solution. Oligomerizes to an active state in the presence of the positive effectors ATP and maltotriose.

Its activity is regulated as follows. Activated by ATP and maltotriose, which are both required for DNA binding. Positively regulates the transcription of the maltose regulon whose gene products are responsible for uptake and catabolism of malto-oligosaccharides. Specifically binds to the promoter region of its target genes, recognizing a short DNA motif called the MalT box. The sequence is that of HTH-type transcriptional regulator MalT from Serratia proteamaculans (strain 568).